Here is a 277-residue protein sequence, read N- to C-terminus: 4-hydroxy-3-prenylphenylpyruvate oxygenase/4-hydroxy-3-prenylbenzoate synthase (277 aa).

The protein belongs to the aldolase class II family. As to quaternary structure, homotetramer. It depends on Fe(2+) as a cofactor.

The enzyme catalyses 3-dimethylallyl-4-hydroxyphenylpyruvate + O2 = 3-dimethylallyl-4-hydroxymandelate + CO2. The catalysed reaction is 3-dimethylallyl-4-hydroxymandelate + O2 = 3-dimethylallyl-4-hydroxybenzoate + CO2 + H2O. The protein operates within antibiotic biosynthesis. Activated by ascorbate. In terms of biological role, involved in the biosynthesis of ring A of the aminocoumarin antibiotic clorobiocin. Catalyzes two consecutive oxidative decarboxylations of 3-dimethylallyl-4-hydroxyphenylpyruvate (3DMA-4HPP) to yield 3-dimethylallyl-4-hydroxybenzoate (3DMA-4HB) via the 3-dimethylallyl-4-hydroxymandelic acid (3DMA-4HMA) intermediate. The sequence is that of 4-hydroxy-3-prenylphenylpyruvate oxygenase/4-hydroxy-3-prenylbenzoate synthase from Streptomyces roseochromogenus subsp. oscitans.